Here is a 161-residue protein sequence, read N- to C-terminus: Cyclic pyranopterin monophosphate synthase (161 aa).

Substrate is bound by residues 73-75 and 110-111; these read LCH and ME. Aspartate 125 is a catalytic residue.

Belongs to the MoaC family. As to quaternary structure, homohexamer; trimer of dimers.

The catalysed reaction is (8S)-3',8-cyclo-7,8-dihydroguanosine 5'-triphosphate = cyclic pyranopterin phosphate + diphosphate. It functions in the pathway cofactor biosynthesis; molybdopterin biosynthesis. In terms of biological role, catalyzes the conversion of (8S)-3',8-cyclo-7,8-dihydroguanosine 5'-triphosphate to cyclic pyranopterin monophosphate (cPMP). The sequence is that of Cyclic pyranopterin monophosphate synthase from Pseudomonas savastanoi pv. phaseolicola (strain 1448A / Race 6) (Pseudomonas syringae pv. phaseolicola (strain 1448A / Race 6)).